Reading from the N-terminus, the 615-residue chain is MSDIIHLLPDHIANQIAAGEVIQRPASVVKELVENAVDAGASNIQVNIKDAGKTLIQVIDDGKGMSETDARMAFERHATSKISTAEDLFSLHTMGFRGEALASIAAVAHIELRTRARGTELGTCLSIAGSNLESIEPEACNEGSIFSVKNLFFNVPARRKFLKSNETEFRNIINEFERIALVNPQVGMSLYHNDAEIFNLPESGLRQRIINIYGKSLNQKLLSLDAQSSMVTISGFVGRPDSAKKRGALQFFFVNGRYMKHPYFHKAIMQAYEQLIPAGDMPNYFVYFTLDPSSIDVNIHPTKTEIKFENEQPIWQILMAATREALAKSSAIPTIDFDVEDAIDIPVYNPVKKSEPSTYKAPKVQVDSSYNPFDTTSYKKPEFDWSKLYQGFENDRVAVQRESETFEDAPIEELPAEASDPEKLFTEVSNPCYQYKGRYIVTSLKSGLAIIDQHRAHVRILFDQYLSNIRQQQGVSQQVLFPEIVEFTAAEAAVLPSLLEDLCFVGFDLSNLGNDNYAINGLPAGIENLDPVNLVKDIVDRAIETGCAVHEKICEAIALSLAKAAAIRPGKSLSLEEMDHLIASLFSCSDSNLTPDGKTIISMLTDEELERRFKC.

It belongs to the DNA mismatch repair MutL/HexB family.

Functionally, this protein is involved in the repair of mismatches in DNA. It is required for dam-dependent methyl-directed DNA mismatch repair. May act as a 'molecular matchmaker', a protein that promotes the formation of a stable complex between two or more DNA-binding proteins in an ATP-dependent manner without itself being part of a final effector complex. The chain is DNA mismatch repair protein MutL from Parabacteroides distasonis (strain ATCC 8503 / DSM 20701 / CIP 104284 / JCM 5825 / NCTC 11152).